The chain runs to 711 residues: Polyribonucleotide nucleotidyltransferase (711 aa).

Mg(2+)-binding residues include D490 and D496. The KH domain occupies 557–616 (PRIETMQIPTDKIREVIGSGGKVIREIVETSGAKVDINDDGIIKIASANGEAIKKAYEMI). Residues 626-694 (GKVYTGTVVK…DRGKVRLSMK (69 aa)) enclose the S1 motif domain.

Belongs to the polyribonucleotide nucleotidyltransferase family. It depends on Mg(2+) as a cofactor.

It localises to the cytoplasm. The catalysed reaction is RNA(n+1) + phosphate = RNA(n) + a ribonucleoside 5'-diphosphate. Functionally, involved in mRNA degradation. Catalyzes the phosphorolysis of single-stranded polyribonucleotides processively in the 3'- to 5'-direction. The polypeptide is Polyribonucleotide nucleotidyltransferase (Dinoroseobacter shibae (strain DSM 16493 / NCIMB 14021 / DFL 12)).